A 470-amino-acid chain; its full sequence is Argininosuccinate synthase (470 aa).

ATP-binding positions include alanine 17–serine 25 and alanine 43. An L-citrulline-binding site is contributed by tyrosine 99. Residues glycine 129 and threonine 131 each coordinate ATP. L-aspartate-binding residues include threonine 131, asparagine 135, and aspartate 136. An L-citrulline-binding site is contributed by asparagine 135. ATP is bound at residue aspartate 136. L-citrulline contacts are provided by arginine 139 and serine 192. Aspartate 194 is an ATP binding site. Residues threonine 201, glutamate 203, and glutamate 280 each contribute to the L-citrulline site. The interval isoleucine 448–aspartate 470 is disordered.

Belongs to the argininosuccinate synthase family. Type 2 subfamily. In terms of assembly, homotetramer.

The protein resides in the cytoplasm. It carries out the reaction L-citrulline + L-aspartate + ATP = 2-(N(omega)-L-arginino)succinate + AMP + diphosphate + H(+). The protein operates within amino-acid biosynthesis; L-arginine biosynthesis; L-arginine from L-ornithine and carbamoyl phosphate: step 2/3. The sequence is that of Argininosuccinate synthase from Kineococcus radiotolerans (strain ATCC BAA-149 / DSM 14245 / SRS30216).